A 564-amino-acid chain; its full sequence is Dihydroxy-acid dehydratase 2 (564 aa).

C59 is a binding site for [2Fe-2S] cluster. D91 provides a ligand contact to Mg(2+). Residue C132 coordinates [2Fe-2S] cluster. Residues D133 and K134 each coordinate Mg(2+). An N6-carboxylysine modification is found at K134. C204 provides a ligand contact to [2Fe-2S] cluster. Residue E454 coordinates Mg(2+). The active-site Proton acceptor is S480.

Belongs to the IlvD/Edd family. In terms of assembly, homodimer. Requires [2Fe-2S] cluster as cofactor. It depends on Mg(2+) as a cofactor.

It carries out the reaction (2R)-2,3-dihydroxy-3-methylbutanoate = 3-methyl-2-oxobutanoate + H2O. The catalysed reaction is (2R,3R)-2,3-dihydroxy-3-methylpentanoate = (S)-3-methyl-2-oxopentanoate + H2O. It functions in the pathway amino-acid biosynthesis; L-isoleucine biosynthesis; L-isoleucine from 2-oxobutanoate: step 3/4. Its pathway is amino-acid biosynthesis; L-valine biosynthesis; L-valine from pyruvate: step 3/4. Functionally, functions in the biosynthesis of branched-chain amino acids. Catalyzes the dehydration of (2R,3R)-2,3-dihydroxy-3-methylpentanoate (2,3-dihydroxy-3-methylvalerate) into 2-oxo-3-methylpentanoate (2-oxo-3-methylvalerate) and of (2R)-2,3-dihydroxy-3-methylbutanoate (2,3-dihydroxyisovalerate) into 2-oxo-3-methylbutanoate (2-oxoisovalerate), the penultimate precursor to L-isoleucine and L-valine, respectively. The polypeptide is Dihydroxy-acid dehydratase 2 (Staphylococcus saprophyticus subsp. saprophyticus (strain ATCC 15305 / DSM 20229 / NCIMB 8711 / NCTC 7292 / S-41)).